The following is a 371-amino-acid chain: tRNA-specific 2-thiouridylase MnmA (371 aa).

Residues 22–29 (GLSGGVDS) and methionine 48 contribute to the ATP site. The interval 108 to 110 (NPD) is interaction with target base in tRNA. Cysteine 113 serves as the catalytic Nucleophile. Cysteine 113 and cysteine 209 are oxidised to a cystine. Position 137 (glycine 137) interacts with ATP. The interaction with tRNA stretch occupies residues 159 to 161 (KDQ). Cysteine 209 acts as the Cysteine persulfide intermediate in catalysis.

The protein belongs to the MnmA/TRMU family.

The protein resides in the cytoplasm. It carries out the reaction S-sulfanyl-L-cysteinyl-[protein] + uridine(34) in tRNA + AH2 + ATP = 2-thiouridine(34) in tRNA + L-cysteinyl-[protein] + A + AMP + diphosphate + H(+). In terms of biological role, catalyzes the 2-thiolation of uridine at the wobble position (U34) of tRNA, leading to the formation of s(2)U34. This is tRNA-specific 2-thiouridylase MnmA from Coxiella burnetii (strain CbuG_Q212) (Coxiella burnetii (strain Q212)).